Consider the following 229-residue polypeptide: 2-C-methyl-D-erythritol 4-phosphate cytidylyltransferase (229 aa).

This sequence belongs to the IspD/TarI cytidylyltransferase family. IspD subfamily.

The enzyme catalyses 2-C-methyl-D-erythritol 4-phosphate + CTP + H(+) = 4-CDP-2-C-methyl-D-erythritol + diphosphate. It functions in the pathway isoprenoid biosynthesis; isopentenyl diphosphate biosynthesis via DXP pathway; isopentenyl diphosphate from 1-deoxy-D-xylulose 5-phosphate: step 2/6. Functionally, catalyzes the formation of 4-diphosphocytidyl-2-C-methyl-D-erythritol from CTP and 2-C-methyl-D-erythritol 4-phosphate (MEP). This Clostridium botulinum (strain Loch Maree / Type A3) protein is 2-C-methyl-D-erythritol 4-phosphate cytidylyltransferase.